We begin with the raw amino-acid sequence, 1291 residues long: Cytoplasmic FMR1-interacting protein (1291 aa).

The disordered stretch occupies residues 1270-1291 (PSVISSSSHYQDPQKLRQSINN). Over residues 1271–1291 (SVISSSSHYQDPQKLRQSINN) the composition is skewed to polar residues.

It belongs to the CYFIP family. As to quaternary structure, interacts with Fmr1 and Rac1. Component of the WAVE complex composed of Hem/Kette, Scar/Wave and Cyfip where it binds through its C-terminus directly to Hem. In the embryo, expressed mainly in the gut and in the developing central nervous system where high levels of expression are found in the CNS neuropile. Expression in the gut diminishes as development proceeds (at protein level). In the adult, expressed specifically in the nervous system.

It is found in the cytoplasm. Functionally, plays a role in guidance and morphology of central and peripheral axons and in synaptic morphology. Also required for formation of cell membrane protrusions and for bristle development. Plays a role in regulating mitochondrial activity, energy metabolism and membrane potential which maintains normal gamma-aminobutyric acid (GABA) signaling and ensures normal social behavior. The protein is Cytoplasmic FMR1-interacting protein of Drosophila melanogaster (Fruit fly).